A 563-amino-acid polypeptide reads, in one-letter code: Arginine--tRNA ligase (563 aa).

Positions 121 to 131 match the 'HIGH' region motif; sequence PNIAKPFSIGH.

The protein belongs to the class-I aminoacyl-tRNA synthetase family. Monomer.

The protein resides in the cytoplasm. It catalyses the reaction tRNA(Arg) + L-arginine + ATP = L-arginyl-tRNA(Arg) + AMP + diphosphate. This Streptococcus pneumoniae (strain P1031) protein is Arginine--tRNA ligase.